A 313-amino-acid polypeptide reads, in one-letter code: Epoxide hydrolase 1 (313 aa).

An AB hydrolase-1 domain is found at 25 to 299 (PAVLFLHGFP…AAHFINQEKA (275 aa)). Asp100 functions as the Nucleophile in the catalytic mechanism. Residue Tyr149 coordinates an epoxide. The active-site Proton donor is Tyr227. His292 (proton acceptor) is an active-site residue.

This sequence belongs to the AB hydrolase superfamily. Epoxide hydrolase family. As to quaternary structure, homodimer. In terms of tissue distribution, highly expressed in fruits 15 days after anthesis (15-DAA).

The enzyme catalyses an epoxide + H2O = an ethanediol. It catalyses the reaction (24S)-24,25-epoxycucurbitadienol + H2O = (24R)-24,25-dihydroxycucurbitadienol. It participates in secondary metabolite biosynthesis; terpenoid biosynthesis. Epoxide hydrolase involved in the biosynthesis of cucurbitacin and mogroside tetracyclic triterpene natural products (e.g. siamenoside I and mogrosides IV, V and VI). Cucurbitacins have cytotoxic properties and exhibit deterrent taste as a defense barrier against herbivores. Mogrosides are nonsugar highly oxygenated compounds used as high-intensity zero-calorie sweeteners; they also possess pharmacological properties such as regulating immunity, lowering blood sugar and lipid levels, protecting the liver, and acting as antioxidants and antitumor agents. Catalyzes the hydrolysis of aromatic epoxide-containing substrates, such as the conversion of 24,25-epoxycucurbitadienol to 24,25-dihydroxycucurbitadienol. This Siraitia grosvenorii (Monk's fruit) protein is Epoxide hydrolase 1.